We begin with the raw amino-acid sequence, 388 residues long: Putative N(4)-(beta-N-acetylglucosaminyl)-L-asparaginase GL17147 (388 aa).

The N-terminal stretch at 1-20 is a signal peptide; the sequence is MYKAQYLWLFGLVLISRSAT. Cystine bridges form between cysteine 94-cysteine 99 and cysteine 193-cysteine 209. Threonine 240 serves as the catalytic Nucleophile. Substrate is bound by residues 268 to 271 and 291 to 294; these read RVGD and TGDG. Residues cysteine 351 and cysteine 378 are joined by a disulfide bond.

It belongs to the Ntn-hydrolase family. Heterotetramer of two alpha and two beta chains arranged as a dimer of alpha/beta heterodimers. Cleaved into an alpha and beta chain by autocatalysis; this activates the enzyme. The N-terminal residue of the beta subunit is responsible for the nucleophile hydrolase activity.

The catalysed reaction is N(4)-(beta-N-acetyl-D-glucosaminyl)-L-asparagine + H2O = N-acetyl-beta-D-glucosaminylamine + L-aspartate + H(+). Its function is as follows. Cleaves the GlcNAc-Asn bond which joins oligosaccharides to the peptide of asparagine-linked glycoproteins. The chain is Putative N(4)-(beta-N-acetylglucosaminyl)-L-asparaginase GL17147 from Drosophila persimilis (Fruit fly).